The primary structure comprises 286 residues: NAD kinase (286 aa).

Aspartate 66 acts as the Proton acceptor in catalysis. Residues aspartate 66–glycine 67, asparagine 137–aspartate 138, arginine 148, arginine 165, aspartate 167, and threonine 178–serine 183 each bind NAD(+).

Belongs to the NAD kinase family. A divalent metal cation is required as a cofactor.

It is found in the cytoplasm. It carries out the reaction NAD(+) + ATP = ADP + NADP(+) + H(+). In terms of biological role, involved in the regulation of the intracellular balance of NAD and NADP, and is a key enzyme in the biosynthesis of NADP. Catalyzes specifically the phosphorylation on 2'-hydroxyl of the adenosine moiety of NAD to yield NADP. The chain is NAD kinase from Chlorobium chlorochromatii (strain CaD3).